We begin with the raw amino-acid sequence, 149 residues long: Deoxyuridine 5'-triphosphate nucleotidohydrolase (149 aa).

Substrate contacts are provided by residues 70-72, Asn-83, and 87-89; these read RSG and LID.

This sequence belongs to the dUTPase family. Mg(2+) is required as a cofactor.

It carries out the reaction dUTP + H2O = dUMP + diphosphate + H(+). The protein operates within pyrimidine metabolism; dUMP biosynthesis; dUMP from dCTP (dUTP route): step 2/2. This enzyme is involved in nucleotide metabolism: it produces dUMP, the immediate precursor of thymidine nucleotides and it decreases the intracellular concentration of dUTP so that uracil cannot be incorporated into DNA. The polypeptide is Deoxyuridine 5'-triphosphate nucleotidohydrolase (Blochmanniella pennsylvanica (strain BPEN)).